Reading from the N-terminus, the 357-residue chain is Peptide chain release factor 1 (357 aa).

Q234 is subject to N5-methylglutamine. Residues 282 to 313 (DSKKQEQRSNNRKQQVGSGDRSERIRTYNFPQ) form a disordered region.

This sequence belongs to the prokaryotic/mitochondrial release factor family. Methylated by PrmC. Methylation increases the termination efficiency of RF1.

The protein localises to the cytoplasm. In terms of biological role, peptide chain release factor 1 directs the termination of translation in response to the peptide chain termination codons UAG and UAA. This is Peptide chain release factor 1 from Borreliella afzelii (strain PKo) (Borrelia afzelii).